Reading from the N-terminus, the 371-residue chain is tRNA-specific 2-thiouridylase MnmA (371 aa).

Residues 11-18 and Met-37 contribute to the ATP site; that span reads GMSGGVDS. Positions 97–99 are interaction with target base in tRNA; sequence NPD. The active-site Nucleophile is Cys-102. A disulfide bond links Cys-102 and Cys-199. Gly-127 provides a ligand contact to ATP. An interaction with tRNA region spans residues 149–151; it reads KDQ. The Cysteine persulfide intermediate role is filled by Cys-199. Residues 311 to 312 form an interaction with tRNA region; the sequence is RY.

The protein belongs to the MnmA/TRMU family.

It is found in the cytoplasm. It carries out the reaction S-sulfanyl-L-cysteinyl-[protein] + uridine(34) in tRNA + AH2 + ATP = 2-thiouridine(34) in tRNA + L-cysteinyl-[protein] + A + AMP + diphosphate + H(+). Its function is as follows. Catalyzes the 2-thiolation of uridine at the wobble position (U34) of tRNA, leading to the formation of s(2)U34. This is tRNA-specific 2-thiouridylase MnmA from Idiomarina loihiensis (strain ATCC BAA-735 / DSM 15497 / L2-TR).